A 117-amino-acid chain; its full sequence is Large ribosomal subunit protein bL17 (117 aa).

This sequence belongs to the bacterial ribosomal protein bL17 family. As to quaternary structure, part of the 50S ribosomal subunit. Contacts protein L32.

This chain is Large ribosomal subunit protein bL17, found in Thermomicrobium roseum (strain ATCC 27502 / DSM 5159 / P-2).